The chain runs to 131 residues: SPbeta prophage-derived uncharacterized protein YoqY (131 aa).

In Bacillus subtilis (strain 168), this protein is SPbeta prophage-derived uncharacterized protein YoqY (yoqY).